Consider the following 331-residue polypeptide: Carbonic anhydrase-related protein 11 (331 aa).

Residues Met1–Ala23 form the signal peptide. Positions Asp33–Arg306 constitute an Alpha-carbonic anhydrase domain. N-linked (GlcNAc...) asparagine glycosylation is found at Asn118, Asn170, Asn189, and Asn263. Residues Arg303–Arg331 are disordered. Residues Leu322–Arg331 are compositionally biased toward basic and acidic residues.

This sequence belongs to the alpha-carbonic anhydrase family.

The protein resides in the secreted. In terms of biological role, does not have a catalytic activity. The polypeptide is Carbonic anhydrase-related protein 11 (CA11) (Sus scrofa (Pig)).